We begin with the raw amino-acid sequence, 537 residues long: Phosphoenolpyruvate carboxykinase (ATP) (537 aa).

Substrate-binding residues include Arg-61, Tyr-195, and Lys-201. ATP contacts are provided by residues Lys-201, His-220, and 236-244 (GLSGTGKTT). Mn(2+) is bound by residues Lys-201 and His-220. Residue Asp-257 participates in Mn(2+) binding. Glu-285 contributes to the ATP binding site. The span at 312–321 (DFNDGSKTEN) shows a compositional bias: basic and acidic residues. The tract at residues 312-339 (DFNDGSKTENTRSAYPLESIPNASPTGR) is disordered. Position 323 (Arg-323) interacts with substrate. The ATP site is built by Arg-323 and Thr-448.

It belongs to the phosphoenolpyruvate carboxykinase (ATP) family. Requires Mn(2+) as cofactor.

Its subcellular location is the cytoplasm. It carries out the reaction oxaloacetate + ATP = phosphoenolpyruvate + ADP + CO2. The protein operates within carbohydrate biosynthesis; gluconeogenesis. Functionally, involved in the gluconeogenesis. Catalyzes the conversion of oxaloacetate (OAA) to phosphoenolpyruvate (PEP) through direct phosphoryl transfer between the nucleoside triphosphate and OAA. The polypeptide is Phosphoenolpyruvate carboxykinase (ATP) (Rhodopseudomonas palustris (strain BisB18)).